A 367-amino-acid chain; its full sequence is Secondary metabolism regulator laeA (367 aa).

Residues 1 to 82 (MFGQQQQQQP…PETYPGHEEN (82 aa)) are disordered. The span at 19 to 41 (LNHNSRWTPPNESAQPRRSSNAM) shows a compositional bias: polar residues. Basic and acidic residues-rich tracts occupy residues 47–56 (TDRDPAEGHP) and 71–82 (KSPETYPGHEEN).

Belongs to the methyltransferase superfamily. LaeA methyltransferase family. Component of the heterotrimeric velvet complex composed of laeA, veA and velB; VeA acting as a bridging protein between laeA and velB.

The protein localises to the nucleus. It catalyses the reaction L-methionyl-[protein] + S-adenosyl-L-methionine = S-methyl-L-methionyl-[protein] + S-adenosyl-L-homocysteine. Functionally, methyltransferase that performs automethylation. No other methyl-accepting substrate has been identified yet. Component of the velvet transcription factor complex that acts as a global regulator for secondary metabolite gene expression. Controls the expression of the monacolin K gene clusters. Also regulates pigmentation. In Monascus pilosus (Red mold), this protein is Secondary metabolism regulator laeA.